A 224-amino-acid polypeptide reads, in one-letter code: Enolase-phosphatase E1 (224 aa).

The protein belongs to the HAD-like hydrolase superfamily. MasA/MtnC family. Monomer. The cofactor is Mg(2+).

It carries out the reaction 5-methylsulfanyl-2,3-dioxopentyl phosphate + H2O = 1,2-dihydroxy-5-(methylsulfanyl)pent-1-en-3-one + phosphate. Its pathway is amino-acid biosynthesis; L-methionine biosynthesis via salvage pathway; L-methionine from S-methyl-5-thio-alpha-D-ribose 1-phosphate: step 3/6. The protein operates within amino-acid biosynthesis; L-methionine biosynthesis via salvage pathway; L-methionine from S-methyl-5-thio-alpha-D-ribose 1-phosphate: step 4/6. Functionally, bifunctional enzyme that catalyzes the enolization of 2,3-diketo-5-methylthiopentyl-1-phosphate (DK-MTP-1-P) into the intermediate 2-hydroxy-3-keto-5-methylthiopentenyl-1-phosphate (HK-MTPenyl-1-P), which is then dephosphorylated to form the acireductone 1,2-dihydroxy-3-keto-5-methylthiopentene (DHK-MTPene). The chain is Enolase-phosphatase E1 from Thioalkalivibrio sulfidiphilus (strain HL-EbGR7).